Consider the following 510-residue polypeptide: Membrane-bound transcription factor site-2 protease (510 aa).

Residues 1-3 (MIP) lie on the Cytoplasmic side of the membrane. Residues 4 to 24 (VSLVVVVVGGWTAVYLADLVL) form a helical membrane-spanning segment. Topologically, residues 25-74 (KSSVYFKHSYEDWLEKNGLSISPFHIRWQTSVFNRAFYSWGRRKARMLYQ) are lumenal. The next 2 membrane-spanning stretches (helical) occupy residues 75–95 (WFNF…FLLG) and 96–107 (KTLMQTLAQMMA). Residues 108-135 (DSPSSSSSSSSSSSSSSSSSIHNEQVLQ) lie on the Lumenal side of the membrane. The chain crosses the membrane as a helical span at residues 136 to 160 (VVVPGINLPVNQLTYFFAAVLISGV). H162 is a binding site for Zn(2+). E163 is an active-site residue. Transmembrane regions (helical) follow at residues 165 to 177 (GHGI…QVRF), 178 to 200 (NGFG…TTHL), and 220 to 242 (FVLA…PFYY). H166 lines the Zn(2+) pocket. At 243–437 (TGVGVLITEV…LPVIVETFVK (195 aa)) the chain is on the lumenal side. An N-linked (GlcNAc...) asparagine glycan is attached at N328. 2 helical membrane passes run 438–455 (YLIS…VPCF) and 456–467 (ALDGQWILNSFL). Over 468–483 (DATLTSVIGDNDVKDL) the chain is Lumenal. A helical transmembrane segment spans residues 484-504 (IGFFILLGGSVLLAANVTLGL). Over 505–510 (WMVTAR) the chain is Cytoplasmic.

This sequence belongs to the peptidase M50A family. Zn(2+) is required as a cofactor.

The protein localises to the membrane. Its subcellular location is the cytoplasm. The protein resides in the golgi apparatus membrane. It carries out the reaction Cleaves several transcription factors that are type-2 transmembrane proteins within membrane-spanning domains. Known substrates include sterol regulatory element-binding protein (SREBP) -1, SREBP-2 and forms of the transcriptional activator ATF6. SREBP-2 is cleaved at the site 477-DRSRILL-|-CVLTFLCLSFNPLTSLLQWGGA-505. The residues Asn-Pro, 11 residues distal to the site of cleavage in the membrane-spanning domain, are important for cleavage by S2P endopeptidase. Replacement of either of these residues does not prevent cleavage, but there is no cleavage if both of these residues are replaced.. Zinc metalloprotease that mediates intramembrane proteolysis of proteins such as ATF6, ATF6B, SREBF1/SREBP1 and SREBF2/SREBP2. Catalyzes the second step in the proteolytic activation of the sterol regulatory element-binding proteins (SREBPs) SREBF1/SREBP1 and SREBF2/SREBP2: cleaves SREBPs within the first transmembrane segment, thereby releasing the N-terminal segment with a portion of the transmembrane segment attached. Mature N-terminal SREBP fragments shuttle to the nucleus and activate gene transcription. Also mediates the second step in the proteolytic activation of the cyclic AMP-dependent transcription factor ATF-6 (ATF6 and ATF6B). Involved in intramembrane proteolysis during bone formation. In astrocytes and osteoblasts, upon DNA damage and ER stress, mediates the second step of the regulated intramembrane proteolytic activation of the transcription factor CREB3L1, leading to the inhibition of cell-cycle progression. The polypeptide is Membrane-bound transcription factor site-2 protease (MBTPS2) (Cricetulus griseus (Chinese hamster)).